Consider the following 454-residue polypeptide: CCA-adding enzyme (454 aa).

Residues Ser-59 and Arg-62 each coordinate ATP. CTP-binding residues include Ser-59 and Arg-62. Residues Asp-71, Asp-73, and Asp-125 each contribute to the Mg(2+) site. The ATP site is built by His-148, Lys-167, and Tyr-176. The CTP site is built by His-148, Lys-167, and Tyr-176.

It belongs to the tRNA nucleotidyltransferase/poly(A) polymerase family. Archaeal CCA-adding enzyme subfamily. As to quaternary structure, homodimer. The cofactor is Mg(2+).

It carries out the reaction a tRNA precursor + 2 CTP + ATP = a tRNA with a 3' CCA end + 3 diphosphate. It catalyses the reaction a tRNA with a 3' CCA end + 2 CTP + ATP = a tRNA with a 3' CCACCA end + 3 diphosphate. Catalyzes the addition and repair of the essential 3'-terminal CCA sequence in tRNAs without using a nucleic acid template. Adds these three nucleotides in the order of C, C, and A to the tRNA nucleotide-73, using CTP and ATP as substrates and producing inorganic pyrophosphate. tRNA 3'-terminal CCA addition is required both for tRNA processing and repair. Also involved in tRNA surveillance by mediating tandem CCA addition to generate a CCACCA at the 3' terminus of unstable tRNAs. While stable tRNAs receive only 3'-terminal CCA, unstable tRNAs are marked with CCACCA and rapidly degraded. The sequence is that of CCA-adding enzyme from Methanosarcina mazei (strain ATCC BAA-159 / DSM 3647 / Goe1 / Go1 / JCM 11833 / OCM 88) (Methanosarcina frisia).